The following is a 1254-amino-acid chain: Zinc finger protein BRUTUS-like At1g18910 (1254 aa).

Residues 1–30 are disordered; it reads MGVGDPLPLPPEKNRREVNKPPDIASTSSS. Residues 454–474 form a helical membrane-spanning segment; that stretch reads IHFLPLGLLKCVIMWFSAQLP. The segment at 1013-1082 adopts a CHY-type zinc-finger fold; it reads PHKLIFGCKH…ASCSNISCSS (70 aa). Cysteine 1020, histidine 1022, cysteine 1033, cysteine 1034, cysteine 1040, cysteine 1043, histidine 1044, histidine 1050, cysteine 1062, cysteine 1065, cysteine 1075, cysteine 1080, cysteine 1089, cysteine 1092, histidine 1103, cysteine 1104, cysteine 1107, cysteine 1110, histidine 1122, cysteine 1123, cysteine 1126, cysteine 1129, histidine 1137, and cysteine 1139 together coordinate Zn(2+). The segment at 1084-1147 adopts a CTCHY-type zinc-finger fold; sequence MGKYYCKICK…VCREKCLEDN (64 aa). The RING-type; atypical zinc finger occupies 1148–1190; the sequence is CPICHEYIFTSNSPVKALPCGHVMHSTCFQEYTCSHYTCPICS.

Binds zinc and iron ions.

It localises to the membrane. It is found in the nucleus. Its pathway is protein modification; protein ubiquitination. Its function is as follows. Probable E3 ubiquitin-protein ligase that may regulate the response to iron deficiency and thus contributes to iron homeostasis. The polypeptide is Zinc finger protein BRUTUS-like At1g18910 (Arabidopsis thaliana (Mouse-ear cress)).